Here is a 214-residue protein sequence, read N- to C-terminus: MINNGKALNNKKSIDYSKLFRHQAKFVAGAIHINQIPDFSLPEIVFVGKSNVGKSSIINTICNNKSLAKVSNTPGRTRQINFFNIVDKLIIVDLPGYGFANVPISVKEQWEGLITYYLRNSHNLMLVNLLIDSRRGIKENDKKVAELLLANKREFQIIFTKSDKVTDRENLNYEAQNFLATLNYLCNVIYVSSRNKEGMRELKASFAQCIKHQR.

One can recognise an EngB-type G domain in the interval 40–212 (SLPEIVFVGK…KASFAQCIKH (173 aa)). GTP contacts are provided by residues 48–55 (GKSNVGKS), 75–79 (GRTRQ), 93–96 (DLPG), 160–163 (TKSD), and 191–193 (VSS). Mg(2+) is bound by residues Ser-55 and Thr-77.

This sequence belongs to the TRAFAC class TrmE-Era-EngA-EngB-Septin-like GTPase superfamily. EngB GTPase family. Mg(2+) is required as a cofactor.

Its function is as follows. Necessary for normal cell division and for the maintenance of normal septation. In Rickettsia prowazekii (strain Madrid E), this protein is Probable GTP-binding protein EngB.